A 294-amino-acid polypeptide reads, in one-letter code: UDP-3-O-acyl-N-acetylglucosamine deacetylase (294 aa).

Residues histidine 75, histidine 232, and aspartate 236 each contribute to the Zn(2+) site. Histidine 259 functions as the Proton donor in the catalytic mechanism.

It belongs to the LpxC family. Requires Zn(2+) as cofactor.

The catalysed reaction is a UDP-3-O-[(3R)-3-hydroxyacyl]-N-acetyl-alpha-D-glucosamine + H2O = a UDP-3-O-[(3R)-3-hydroxyacyl]-alpha-D-glucosamine + acetate. The protein operates within glycolipid biosynthesis; lipid IV(A) biosynthesis; lipid IV(A) from (3R)-3-hydroxytetradecanoyl-[acyl-carrier-protein] and UDP-N-acetyl-alpha-D-glucosamine: step 2/6. In terms of biological role, catalyzes the hydrolysis of UDP-3-O-myristoyl-N-acetylglucosamine to form UDP-3-O-myristoylglucosamine and acetate, the committed step in lipid A biosynthesis. This chain is UDP-3-O-acyl-N-acetylglucosamine deacetylase, found in Campylobacter fetus subsp. fetus (strain 82-40).